Here is a 297-residue protein sequence, read N- to C-terminus: Transcription factor LRL3 (297 aa).

The tract at residues 59–109 (PDQFHHPQESGGPTMGSQEGLQPQGTVSTTSAPVVRQKPRVRARRGQATDP) is disordered. Positions 73-90 (MGSQEGLQPQGTVSTTSA) are enriched in polar residues. The segment at 105-118 (QATDPHSIAERLRR) is basic motif; degenerate. Residues 105–154 (QATDPHSIAERLRRERIAERMKSLQELVPNTNKTDKASMLDEIIEYVRFL) enclose the bHLH domain. The helix-loop-helix motif stretch occupies residues 119–154 (ERIAERMKSLQELVPNTNKTDKASMLDEIIEYVRFL).

Homodimer. In terms of tissue distribution, expressed in trichomes of the root maturation zone. Detected constitutively in flowers.

It is found in the nucleus. In terms of biological role, transcription factor that regulates the development of root hairs. Does not seem to be involved in the regulation of sperm cell development. The chain is Transcription factor LRL3 from Arabidopsis thaliana (Mouse-ear cress).